Here is a 32-residue protein sequence, read N- to C-terminus: Photosystem I reaction center subunit XII (32 aa).

The chain crosses the membrane as a helical span at residues 10 to 27 (VVALISALVTGILALRLG).

This sequence belongs to the PsaM family.

It is found in the plastid. Its subcellular location is the chloroplast thylakoid membrane. This is Photosystem I reaction center subunit XII from Zygnema circumcarinatum (Green alga).